The following is a 338-amino-acid chain: Envelope glycoprotein K (338 aa).

The N-terminal stretch at Met-1 to Gly-30 is a signal peptide. The Extracellular portion of the chain corresponds to Ala-31 to Thr-121. The tract at residues Ala-31–Thr-121 is involved in fusion. N-linked (GlcNAc...) asparagine; by host glycosylation is found at Asn-48 and Asn-58. Residues Arg-122–His-140 form a helical membrane-spanning segment. At Gln-141–Pro-212 the chain is on the cytoplasmic side. Residues Ala-213–Val-233 traverse the membrane as a helical segment. The Extracellular segment spans residues Gly-234 to Cys-243. The chain crosses the membrane as a helical span at residues Ala-244 to Leu-264. The Cytoplasmic portion of the chain corresponds to Thr-265–Ser-301. The interval Thr-265–Ser-301 is interaction with UL20. Residues Ile-302–Leu-322 form a helical membrane-spanning segment. Over Val-323–Val-338 the chain is Extracellular.

This sequence belongs to the alphaherpesvirinae glycoprotein K family. In terms of assembly, interacts (via UL20 interaction region) with protein UL20 (via N-terminus); this interaction probably plays a role in the coordinate transport of protein UL20 and gK to the trans-Golgi network (TGN), and is required for the cell surface expression of gK. In terms of processing, N-glycosylated.

The protein resides in the host cell membrane. It is found in the host endosome membrane. It localises to the host Golgi apparatus membrane. Its function is as follows. Glycoprotein that probably modulates membrane fusion events during secondary envelopment of cytoplasmic capsids that bud into specific trans-Golgi network (TGN)-derived membranes. Also plays a role, together with gB, in virus-induced cell-to-cell fusion (syncytia formation). Seems to block fusion of virions with infected-cell membranes. This is Envelope glycoprotein K (gK) from Homo sapiens (Human).